Consider the following 505-residue polypeptide: ATP synthase subunit beta (505 aa).

Position 157 to 164 (157 to 164) interacts with ATP; it reads GGAGVGKT.

This sequence belongs to the ATPase alpha/beta chains family. In terms of assembly, F-type ATPases have 2 components, CF(1) - the catalytic core - and CF(0) - the membrane proton channel. CF(1) has five subunits: alpha(3), beta(3), gamma(1), delta(1), epsilon(1). CF(0) has three main subunits: a(1), b(2) and c(9-12). The alpha and beta chains form an alternating ring which encloses part of the gamma chain. CF(1) is attached to CF(0) by a central stalk formed by the gamma and epsilon chains, while a peripheral stalk is formed by the delta and b chains.

The protein localises to the cell inner membrane. The enzyme catalyses ATP + H2O + 4 H(+)(in) = ADP + phosphate + 5 H(+)(out). Its function is as follows. Produces ATP from ADP in the presence of a proton gradient across the membrane. The catalytic sites are hosted primarily by the beta subunits. This is ATP synthase subunit beta from Bacteroides fragilis (strain ATCC 25285 / DSM 2151 / CCUG 4856 / JCM 11019 / LMG 10263 / NCTC 9343 / Onslow / VPI 2553 / EN-2).